The primary structure comprises 164 residues: Large ribosomal subunit protein uL10 (164 aa).

The protein belongs to the universal ribosomal protein uL10 family. In terms of assembly, part of the ribosomal stalk of the 50S ribosomal subunit. The N-terminus interacts with L11 and the large rRNA to form the base of the stalk. The C-terminus forms an elongated spine to which L12 dimers bind in a sequential fashion forming a multimeric L10(L12)X complex.

Forms part of the ribosomal stalk, playing a central role in the interaction of the ribosome with GTP-bound translation factors. The chain is Large ribosomal subunit protein uL10 from Pseudoalteromonas translucida (strain TAC 125).